The following is a 447-amino-acid chain: Na(+)-translocating NADH-quinone reductase subunit A (447 aa).

It belongs to the NqrA family. As to quaternary structure, composed of six subunits; NqrA, NqrB, NqrC, NqrD, NqrE and NqrF.

The enzyme catalyses a ubiquinone + n Na(+)(in) + NADH + H(+) = a ubiquinol + n Na(+)(out) + NAD(+). In terms of biological role, NQR complex catalyzes the reduction of ubiquinone-1 to ubiquinol by two successive reactions, coupled with the transport of Na(+) ions from the cytoplasm to the periplasm. NqrA to NqrE are probably involved in the second step, the conversion of ubisemiquinone to ubiquinol. The protein is Na(+)-translocating NADH-quinone reductase subunit A of Neisseria meningitidis serogroup B (strain ATCC BAA-335 / MC58).